Reading from the N-terminus, the 470-residue chain is Cysteine--tRNA ligase (470 aa).

C27 is a binding site for Zn(2+). Residues 29 to 39 (PTVYNFFHIGN) carry the 'HIGH' region motif. Positions 211, 236, and 240 each coordinate Zn(2+). The 'KMSKS' region motif lies at 268–272 (KMSKS). Residue K271 participates in ATP binding.

Belongs to the class-I aminoacyl-tRNA synthetase family. In terms of assembly, monomer. Zn(2+) is required as a cofactor.

It is found in the cytoplasm. It catalyses the reaction tRNA(Cys) + L-cysteine + ATP = L-cysteinyl-tRNA(Cys) + AMP + diphosphate. The protein is Cysteine--tRNA ligase of Clostridium botulinum (strain Eklund 17B / Type B).